We begin with the raw amino-acid sequence, 409 residues long: Putative competence-damage inducible protein (409 aa).

Belongs to the CinA family.

The sequence is that of Putative competence-damage inducible protein from Clostridium botulinum (strain Langeland / NCTC 10281 / Type F).